Reading from the N-terminus, the 266-residue chain is RNA polymerase II subunit A C-terminal domain phosphatase ssu-72 (266 aa).

The disordered stretch occupies residues 1-31 (MSAVDTPTGAASSSKPDQNEQNGQNGGREDS). Residues 9-23 (GAASSSKPDQNEQNG) show a composition bias toward polar residues.

It belongs to the SSU72 phosphatase family. In terms of assembly, component of the cleavage and polyadenylation factor (CPF) complex.

It is found in the nucleus. It catalyses the reaction O-phospho-L-seryl-[protein] + H2O = L-seryl-[protein] + phosphate. The catalysed reaction is O-phospho-L-threonyl-[protein] + H2O = L-threonyl-[protein] + phosphate. Its function is as follows. Processively dephosphorylates Ser-5 of the heptad repeats YSPTSPS in the C-terminal domain of the largest RNA polymerase II subunit (rpb-1). Component of the cleavage and polyadenylation factor (CPF) complex, which plays a key role in polyadenylation-dependent pre-mRNA 3'-end formation and cooperates with cleavage factors including the CFIA complex and NAB4/CFIB. Ssu-72 is required for 3'-end formation of snoRNAs. The chain is RNA polymerase II subunit A C-terminal domain phosphatase ssu-72 (ssu-72) from Neurospora crassa (strain ATCC 24698 / 74-OR23-1A / CBS 708.71 / DSM 1257 / FGSC 987).